Here is a 484-residue protein sequence, read N- to C-terminus: Probable cytochrome P450 316a1 (484 aa).

A heme-binding site is contributed by Cys-433.

The protein belongs to the cytochrome P450 family. The cofactor is heme.

It localises to the endoplasmic reticulum membrane. Its subcellular location is the microsome membrane. Its function is as follows. May be involved in the metabolism of insect hormones and in the breakdown of synthetic insecticides. The protein is Probable cytochrome P450 316a1 (Cyp316a1) of Drosophila melanogaster (Fruit fly).